Here is a 531-residue protein sequence, read N- to C-terminus: 4-hydroxyphenylacetaldehyde oxime monooxygenase (531 aa).

A helical membrane pass occupies residues 18–38 (WQTCLLVLLPVLLVSYYLLTS). Heme b contacts are provided by Arg122, Arg151, Arg466, and Cys468.

Belongs to the cytochrome P450 family. It depends on heme b as a cofactor.

It localises to the endoplasmic reticulum membrane. It carries out the reaction (E)-4-hydroxyphenylacetaldehyde oxime + reduced [NADPH--hemoprotein reductase] + O2 = (S)-4-hydroxymandelonitrile + oxidized [NADPH--hemoprotein reductase] + 2 H2O + H(+). It catalyses the reaction (E)-4-hydroxyphenylacetaldehyde oxime = (Z)-(4-hydroxyphenyl)acetaldehyde oxime. The catalysed reaction is (Z)-(4-hydroxyphenyl)acetaldehyde oxime = 4-hydroxyphenylacetonitrile + H2O. The enzyme catalyses 4-hydroxyphenylacetonitrile + reduced [NADPH--hemoprotein reductase] + O2 = (S)-4-hydroxymandelonitrile + oxidized [NADPH--hemoprotein reductase] + H2O + H(+). Its pathway is secondary metabolite biosynthesis; dhurrin biosynthesis; dhurrin from L-tyrosine: step 2/3. Its function is as follows. Cytochrome P450 involved in the biosynthesis of the cyanogenic glucoside dhurrin. Catalyzes the conversion of p-hydroxyphenylacetaldoxime to p-hydroxymandelonitrile via three different and successive activities: isomerization of the (E) isomer to the (Z) isomer of p-hydroxyphenylacetaldoxime, followed by dehydration of the oxime to the corresponding nitrile, and C-hydroxylation of the nitrile to produce p-hydroxymandelonitrile. This Sorghum bicolor (Sorghum) protein is 4-hydroxyphenylacetaldehyde oxime monooxygenase.